The primary structure comprises 282 residues: Ribonuclease P protein subunit p38 (282 aa).

Disordered stretches follow at residues methionine 1 to valine 21 and glutamate 61 to glycine 103. Alanine 2 carries the post-translational modification N-acetylalanine. Serine 12 is modified (phosphoserine). Residues glutamate 88 to glycine 97 show a composition bias toward basic and acidic residues. Phosphoserine is present on residues serine 226 and serine 235. The segment at lysine 262–lysine 282 is disordered. Over residues lysine 269–lysine 282 the composition is skewed to basic residues.

Belongs to the eukaryotic ribosomal protein eL8 family. Component of nuclear RNase P and RNase MRP ribonucleoproteins. RNase P consists of a catalytic RNA moiety and about 10 protein subunits; POP1, POP4, POP5, POP7, RPP14, RPP21, RPP25, RPP30, RPP38 and RPP40. Within the RNase P complex, POP1, POP7 and RPP25 form the 'finger' subcomplex, POP5, RPP14, RPP40 and homodimeric RPP30 form the 'palm' subcomplex, and RPP21, POP4 and RPP38 form the 'wrist' subcomplex. All subunits of the RNase P complex interact with the catalytic RNA. Several subunits of RNase P are also part of the RNase MRP complex. RNase MRP consists of a catalytic RNA moiety and about 8 protein subunits; POP1, POP7, RPP25, RPP30, RPP38, RPP40 and possibly also POP4 and POP5.

It localises to the nucleus. It is found in the nucleolus. Functionally, component of ribonuclease P, a ribonucleoprotein complex that generates mature tRNA molecules by cleaving their 5'-ends. Also a component of the MRP ribonuclease complex, which cleaves pre-rRNA sequences. In Bos taurus (Bovine), this protein is Ribonuclease P protein subunit p38 (RPP38).